Consider the following 187-residue polypeptide: Calcium and integrin-binding family member 2 (187 aa).

EF-hand domains lie at 66–101 (RENPFKERIVAAFSEDGEGNLTFNDFVDMFSVLCES), 103–138 (PRELKANYAFKIYDFNTDNFICKEDLELTLARLTKS), and 144–179 (EVVLVCDKVIEEADLDGDGKLGFADFEDMIAKAPDF). 9 residues coordinate Ca(2+): Asp-116, Asn-118, Asp-120, Asp-127, Asp-157, Asp-159, Asp-161, Lys-163, and Asp-168.

In terms of assembly, monomer. Homodimer. Interacts with WHRN and MYO7A. Interacts with ITGA2B (via C-terminus cytoplasmic tail region); the interactions are stabilized/increased in a calcium and magnesium-dependent manner. Interacts with ITGA7 (via C-terminus cytoplasmic tail region); the interactions are stabilized/increased in a calcium and magnesium-dependent manner. Interacts with TMC1. Interacts with TMC2. Widely expressed.

The protein resides in the cytoplasm. It localises to the cell projection. Its subcellular location is the stereocilium. It is found in the photoreceptor inner segment. The protein localises to the cilium. The protein resides in the photoreceptor outer segment. It localises to the cell membrane. Its subcellular location is the sarcolemma. Calcium- and integrin-binding protein that plays a role in intracellular calcium homeostasis. Acts as an auxiliary subunit of the sensory mechanoelectrical transduction (MET) channel in hair cells. Essential for mechanoelectrical transduction (MET) currents in auditory hair cells and thereby required for hearing. Regulates the function of hair cell mechanotransduction by controlling the distribution of transmembrane channel-like proteins TMC1 and TMC2, and by regulating the function of the MET channels in hair cells. Required for the maintenance of auditory hair cell stereocilia bundle morphology and function and for hair-cell survival in the cochlea. Critical for proper photoreceptor cell maintenance and function. Plays a role in intracellular calcium homeostasis by decreasing ATP-induced calcium release. This Homo sapiens (Human) protein is Calcium and integrin-binding family member 2 (CIB2).